The chain runs to 431 residues: Enolase (431 aa).

Glutamine 167 provides a ligand contact to (2R)-2-phosphoglycerate. The Proton donor role is filled by glutamate 209. Aspartate 246, glutamate 290, and aspartate 317 together coordinate Mg(2+). Positions 342, 371, 372, and 393 each coordinate (2R)-2-phosphoglycerate. Lysine 342 (proton acceptor) is an active-site residue.

The protein belongs to the enolase family. As to quaternary structure, component of the RNA degradosome, a multiprotein complex involved in RNA processing and mRNA degradation. Mg(2+) serves as cofactor.

The protein localises to the cytoplasm. Its subcellular location is the secreted. It localises to the cell surface. It catalyses the reaction (2R)-2-phosphoglycerate = phosphoenolpyruvate + H2O. It participates in carbohydrate degradation; glycolysis; pyruvate from D-glyceraldehyde 3-phosphate: step 4/5. Functionally, catalyzes the reversible conversion of 2-phosphoglycerate (2-PG) into phosphoenolpyruvate (PEP). It is essential for the degradation of carbohydrates via glycolysis. This is Enolase from Yersinia enterocolitica serotype O:8 / biotype 1B (strain NCTC 13174 / 8081).